The following is a 395-amino-acid chain: MSILATEKEKEFMIVNMGPHHPSMHGVLRLIVTLDGEDVIDCEPILGYLHRGMEKIAENRTIIQYLPYVTRWDYLATMFTEAITVNGPEQLGNIRVPKRASYIRVIMLELSRIASHLLWLGPFMADIGAQTPFFYIFRERELVYDLFEAATGMRMMHNYFRIGGVAADLPYGWIDKCLDFCDYFLTGVAEYQKLITRNPIFLERVEGVGIIGGEEAINWGLSGPMLRASGIEWDLRKVDHYECYDEFDWEVQWQKEGDSLARYLVRIGEMTESVKIIQQALEGIPGGPYENLEIRCFDRESDPERNDFENRFISKKPSPTFELTKQELYARVEAPKGELGIFLIGDQSGFPWRWKIRPPGFINLQILPQLVKRMKLADIMTILGSIDIIMGEVDR.

This sequence belongs to the complex I 49 kDa subunit family. NDH is composed of at least 16 different subunits, 5 of which are encoded in the nucleus.

It is found in the plastid. It localises to the chloroplast thylakoid membrane. The enzyme catalyses a plastoquinone + NADH + (n+1) H(+)(in) = a plastoquinol + NAD(+) + n H(+)(out). It carries out the reaction a plastoquinone + NADPH + (n+1) H(+)(in) = a plastoquinol + NADP(+) + n H(+)(out). Functionally, NDH shuttles electrons from NAD(P)H:plastoquinone, via FMN and iron-sulfur (Fe-S) centers, to quinones in the photosynthetic chain and possibly in a chloroplast respiratory chain. The immediate electron acceptor for the enzyme in this species is believed to be plastoquinone. Couples the redox reaction to proton translocation, and thus conserves the redox energy in a proton gradient. This Citrus sinensis (Sweet orange) protein is NAD(P)H-quinone oxidoreductase subunit H, chloroplastic.